We begin with the raw amino-acid sequence, 185 residues long: Tetratricopeptide repeat protein 36 homolog (185 aa).

TPR repeat units follow at residues 53–86, 88–119, and 125–158; these read SREL…AQRA, VLNN…ANDQ, and CHAH…GSKF.

Belongs to the TTC36 family.

This is Tetratricopeptide repeat protein 36 homolog from Drosophila melanogaster (Fruit fly).